Consider the following 249-residue polypeptide: Enolase-phosphatase E1 (249 aa).

Mg(2+) is bound by residues Asp9 and Glu11. Residues 137 to 138 and Lys177 contribute to the substrate site; that span reads SS. Mg(2+) is bound at residue Asp204.

It belongs to the HAD-like hydrolase superfamily. MasA/MtnC family. In terms of assembly, monomer. Mg(2+) serves as cofactor.

Its subcellular location is the cytoplasm. It localises to the nucleus. The enzyme catalyses 5-methylsulfanyl-2,3-dioxopentyl phosphate + H2O = 1,2-dihydroxy-5-(methylsulfanyl)pent-1-en-3-one + phosphate. It participates in amino-acid biosynthesis; L-methionine biosynthesis via salvage pathway; L-methionine from S-methyl-5-thio-alpha-D-ribose 1-phosphate: step 3/6. The protein operates within amino-acid biosynthesis; L-methionine biosynthesis via salvage pathway; L-methionine from S-methyl-5-thio-alpha-D-ribose 1-phosphate: step 4/6. Bifunctional enzyme that catalyzes the enolization of 2,3-diketo-5-methylthiopentyl-1-phosphate (DK-MTP-1-P) into the intermediate 2-hydroxy-3-keto-5-methylthiopentenyl-1-phosphate (HK-MTPenyl-1-P), which is then dephosphorylated to form the acireductone 1,2-dihydroxy-3-keto-5-methylthiopentene (DHK-MTPene). This chain is Enolase-phosphatase E1, found in Lodderomyces elongisporus (strain ATCC 11503 / CBS 2605 / JCM 1781 / NBRC 1676 / NRRL YB-4239) (Yeast).